The following is a 739-amino-acid chain: Eukaryotic translation initiation factor 3 subunit B (739 aa).

Residues 1 to 98 (MSINEEDYLQ…LFIQFKSTES (98 aa)) are sufficient for interaction with HCR1 and TIF32. The interval 1–224 (MSINEEDYLQ…GIQSWGGANF (224 aa)) is sufficient for interaction with PIC8. One can recognise an RRM domain in the interval 37 to 124 (NYIIVDGAPI…HRLLVNKLSD (88 aa)). 7 WD repeats span residues 190-229 (PRKGFTSKYAKFSPKGTYLFSIHPQGIQSWGGANFNSIKR), 231-293 (FHQQ…RTFA), 301-339 (QKEMPWPLVKWSYDDKYCARQGPDALAIYETESNFQLLD), 343-385 (VKVD…QTAR), 453-502 (ELKD…KGGV), 537-579 (IENK…ETNK), and 592-630 (DKFSGMTNISWDPSGRFVAAWSTSWLHAIENGYRLYEFT).

It belongs to the eIF-3 subunit B family. In terms of assembly, component of the eukaryotic translation initiation factor 3 (eIF-3) complex.

The protein resides in the cytoplasm. Functionally, RNA-binding component of the eukaryotic translation initiation factor 3 (eIF-3) complex, which is involved in protein synthesis of a specialized repertoire of mRNAs and, together with other initiation factors, stimulates binding of mRNA and methionyl-tRNAi to the 40S ribosome. The eIF-3 complex specifically targets and initiates translation of a subset of mRNAs involved in cell proliferation. This chain is Eukaryotic translation initiation factor 3 subunit B, found in Candida albicans (strain SC5314 / ATCC MYA-2876) (Yeast).